The chain runs to 778 residues: Endonuclease MutS2 (778 aa).

ATP is bound at residue 328–335 (GPNTGGKT). In terms of domain architecture, Smr spans 702–777 (LDLRGKRYEE…GSGATIVTFK (76 aa)).

This sequence belongs to the DNA mismatch repair MutS family. MutS2 subfamily. As to quaternary structure, homodimer. Binds to stalled ribosomes, contacting rRNA.

Endonuclease that is involved in the suppression of homologous recombination and thus may have a key role in the control of bacterial genetic diversity. Its function is as follows. Acts as a ribosome collision sensor, splitting the ribosome into its 2 subunits. Detects stalled/collided 70S ribosomes which it binds and splits by an ATP-hydrolysis driven conformational change. Acts upstream of the ribosome quality control system (RQC), a ribosome-associated complex that mediates the extraction of incompletely synthesized nascent chains from stalled ribosomes and their subsequent degradation. Probably generates substrates for RQC. The chain is Endonuclease MutS2 from Streptococcus pneumoniae (strain 70585).